Here is a 51-residue protein sequence, read N- to C-terminus: U-Asilidin(1)-Mar1a (51 aa).

A signal peptide spans 1–23 (MANYIEVFSVLAIIFATVLAALA). Cystine bridges form between Cys-26/Cys-40, Cys-33/Cys-44, and Cys-39/Cys-49.

Belongs to the asilidin-1 family. As to expression, expressed by the venom gland. Is the most highly expressed peptide and is around 3000 times higher expressed in the thoracic glands compared to its body tissues.

Its subcellular location is the secreted. Functionally, induces neurotoxic effect on honeybees, including slow movements, disorientation and paralysis. Since it provokes similar symptoms than omega-atracotoxin, it is probable that it acts in the same way by inhibiting voltage-gated calcium channels. The chain is U-Asilidin(1)-Mar1a from Machimus arthriticus (Breck robberfly).